Consider the following 372-residue polypeptide: N-methyl-L-tryptophan oxidase (372 aa).

Residue 4–34 (DLIIIGSGSVGAAAGYYATRAGLKVLMTDAH) participates in FAD binding. Residue cysteine 307 is modified to S-8alpha-FAD cysteine.

Belongs to the MSOX/MTOX family. MTOX subfamily. In terms of assembly, monomer. FAD serves as cofactor.

The enzyme catalyses N(alpha)-methyl-L-tryptophan + O2 + H2O = L-tryptophan + formaldehyde + H2O2. Functionally, catalyzes the oxidative demethylation of N-methyl-L-tryptophan. This is N-methyl-L-tryptophan oxidase from Citrobacter koseri (strain ATCC BAA-895 / CDC 4225-83 / SGSC4696).